A 1380-amino-acid chain; its full sequence is DNA-directed RNA polymerase subunit beta (1380 aa).

The protein belongs to the RNA polymerase beta chain family. The RNAP catalytic core consists of 2 alpha, 1 beta, 1 beta' and 1 omega subunit. When a sigma factor is associated with the core the holoenzyme is formed, which can initiate transcription.

The enzyme catalyses RNA(n) + a ribonucleoside 5'-triphosphate = RNA(n+1) + diphosphate. Its function is as follows. DNA-dependent RNA polymerase catalyzes the transcription of DNA into RNA using the four ribonucleoside triphosphates as substrates. The polypeptide is DNA-directed RNA polymerase subunit beta (Sinorhizobium medicae (strain WSM419) (Ensifer medicae)).